The sequence spans 444 residues: Tubulin beta chain (444 aa).

Positions 11, 68, 137, 141, 142, 143, 203, and 225 each coordinate GTP. A Mg(2+)-binding site is contributed by E68. Residues 424–444 are disordered; the sequence is QDATAEEEGEFDEDEEMDEMM. Over residues 427–444 the composition is skewed to acidic residues; the sequence is TAEEEGEFDEDEEMDEMM.

This sequence belongs to the tubulin family. As to quaternary structure, dimer of alpha and beta chains. A typical microtubule is a hollow water-filled tube with an outer diameter of 25 nm and an inner diameter of 15 nM. Alpha-beta heterodimers associate head-to-tail to form protofilaments running lengthwise along the microtubule wall with the beta-tubulin subunit facing the microtubule plus end conferring a structural polarity. Microtubules usually have 13 protofilaments but different protofilament numbers can be found in some organisms and specialized cells. Mg(2+) serves as cofactor.

It is found in the cytoplasm. Its subcellular location is the cytoskeleton. Functionally, tubulin is the major constituent of microtubules, a cylinder consisting of laterally associated linear protofilaments composed of alpha- and beta-tubulin heterodimers. Microtubules grow by the addition of GTP-tubulin dimers to the microtubule end, where a stabilizing cap forms. Below the cap, tubulin dimers are in GDP-bound state, owing to GTPase activity of alpha-tubulin. This chain is Tubulin beta chain, found in Achlya klebsiana.